The following is a 126-amino-acid chain: Desulfoferrodoxin (126 aa).

Fe cation-binding residues include Cys-10, Cys-13, Cys-29, Cys-30, His-49, His-69, His-75, Cys-116, and His-119.

It belongs to the desulfoferrodoxin family. In terms of assembly, homodimer. Requires Fe(3+) as cofactor. The cofactor is Cu(2+).

It carries out the reaction reduced [rubredoxin] + superoxide + 2 H(+) = oxidized [rubredoxin] + H2O2. Its function is as follows. Catalyzes the one-electron reduction of superoxide anion radical to hydrogen peroxide at a nonheme ferrous iron center. Plays a fundamental role in case of oxidative stress via its superoxide detoxification activity. The protein is Desulfoferrodoxin (dfx) of Nitratidesulfovibrio vulgaris (strain ATCC 29579 / DSM 644 / CCUG 34227 / NCIMB 8303 / VKM B-1760 / Hildenborough) (Desulfovibrio vulgaris).